Consider the following 342-residue polypeptide: GTPase Obg (342 aa).

Positions 1-159 (MKFIDEAKIY…RWIRLELKLL (159 aa)) constitute an Obg domain. The OBG-type G domain occupies 160–332 (ADVGIIGLPN…LLYKIGEALK (173 aa)). GTP contacts are provided by residues 166–173 (GLPNVGKS), 191–195 (FTTLT), 214–217 (DIPG), 284–287 (NKTD), and 313–315 (SAA). The Mg(2+) site is built by Ser173 and Thr193.

Belongs to the TRAFAC class OBG-HflX-like GTPase superfamily. OBG GTPase family. As to quaternary structure, monomer. It depends on Mg(2+) as a cofactor.

It localises to the cytoplasm. An essential GTPase which binds GTP, GDP and possibly (p)ppGpp with moderate affinity, with high nucleotide exchange rates and a fairly low GTP hydrolysis rate. Plays a role in control of the cell cycle, stress response, ribosome biogenesis and in those bacteria that undergo differentiation, in morphogenesis control. The chain is GTPase Obg from Syntrophus aciditrophicus (strain SB).